A 49-amino-acid chain; its full sequence is Large ribosomal subunit protein eL40 (49 aa).

The protein belongs to the eukaryotic ribosomal protein eL40 family.

The polypeptide is Large ribosomal subunit protein eL40 (Natronomonas pharaonis (strain ATCC 35678 / DSM 2160 / CIP 103997 / JCM 8858 / NBRC 14720 / NCIMB 2260 / Gabara) (Halobacterium pharaonis)).